A 142-amino-acid chain; its full sequence is Two-component response regulator ARR22 (142 aa).

The Response regulatory domain maps to 23 to 140; the sequence is NVLIVDDDPL…KIFPLISHLF (118 aa). D74 is subject to 4-aspartylphosphate.

It belongs to the ARR family. Type-A subfamily. Two-component system major event consists of a His-to-Asp phosphorelay between a sensor histidine kinase (HK) and a response regulator (RR). In plants, the His-to-Asp phosphorelay involves an additional intermediate named Histidine-containing phosphotransfer protein (HPt). This multistep phosphorelay consists of a His-Asp-His-Asp sequential transfer of a phosphate group between first a His and an Asp of the HK protein, followed by the transfer to a conserved His of the HPt protein and finally the transfer to an Asp in the receiver domain of the RR protein.

The protein localises to the nucleus. In terms of biological role, functions as a response regulator involved in His-to-Asp phosphorelay signal transduction system. Phosphorylation of the Asp residue in the receiver domain activates the ability of the protein to promote the transcription of target genes. Type-A response regulators seem to act as negative regulators of the cytokinin signaling. The protein is Two-component response regulator ARR22 (ARR22) of Arabidopsis thaliana (Mouse-ear cress).